We begin with the raw amino-acid sequence, 472 residues long: Pyruvate kinase (472 aa).

Arg-33 serves as a coordination point for substrate. Residues Asn-35, Ser-37, and Asp-67 each coordinate K(+). ATP is bound at residue 35–38 (NFSH). The ATP site is built by Arg-74 and Lys-155. Glu-220 is a binding site for Mg(2+). The substrate site is built by Gly-243, Asp-244, and Thr-276. Asp-244 is a binding site for Mg(2+).

The protein belongs to the pyruvate kinase family. As to quaternary structure, homotetramer. Mg(2+) is required as a cofactor. K(+) serves as cofactor.

The catalysed reaction is pyruvate + ATP = phosphoenolpyruvate + ADP + H(+). It participates in carbohydrate degradation; glycolysis; pyruvate from D-glyceraldehyde 3-phosphate: step 5/5. The chain is Pyruvate kinase (pyk) from Mycobacterium tuberculosis (strain CDC 1551 / Oshkosh).